Reading from the N-terminus, the 224-residue chain is Iron-sulfur cluster repair protein ScdA (224 aa).

This sequence belongs to the RIC family. ScdA subfamily. As to quaternary structure, homodimer.

It localises to the cytoplasm. Its function is as follows. Di-iron-containing protein involved in the repair of iron-sulfur clusters damaged by oxidative and nitrosative stress conditions. This Staphylococcus epidermidis (strain ATCC 35984 / DSM 28319 / BCRC 17069 / CCUG 31568 / BM 3577 / RP62A) protein is Iron-sulfur cluster repair protein ScdA.